The primary structure comprises 196 residues: MSDKATDIANLLAPTVVSLGLELLGVEYLPAPGGATLRLYIDVPLAEQPERIINVDDCERVSREVSAQLDVEDPISGNYTLEVSSPGVDRPLFNLEQFARHQGESAKVTLKLPQDNRRRLQGRIEATDEAAGTITFIVDKTEVVVSADNIDKARIMPDWVALGLAPSKPTGPAPKRPKPNTNSSSNEPAAKKPRAE.

Residues 163–196 (GLAPSKPTGPAPKRPKPNTNSSSNEPAAKKPRAE) are disordered.

This sequence belongs to the RimP family.

It is found in the cytoplasm. In terms of biological role, required for maturation of 30S ribosomal subunits. The chain is Ribosome maturation factor RimP from Stenotrophomonas maltophilia (strain K279a).